The chain runs to 413 residues: Tyrosine--tRNA ligase (413 aa).

Y34 lines the L-tyrosine pocket. The 'HIGH' region motif lies at 39 to 48 (CTAQSLHVGN). L-tyrosine is bound by residues Y171 and Q175. A 'KMSKS' region motif is present at residues 231-235 (KMGKT). An ATP-binding site is contributed by K234. The S4 RNA-binding domain occupies 346 to 411 (IPITELLVTI…GKKCHILVKI (66 aa)).

This sequence belongs to the class-I aminoacyl-tRNA synthetase family. TyrS type 1 subfamily. In terms of assembly, homodimer.

It localises to the cytoplasm. The catalysed reaction is tRNA(Tyr) + L-tyrosine + ATP = L-tyrosyl-tRNA(Tyr) + AMP + diphosphate + H(+). Catalyzes the attachment of tyrosine to tRNA(Tyr) in a two-step reaction: tyrosine is first activated by ATP to form Tyr-AMP and then transferred to the acceptor end of tRNA(Tyr). The polypeptide is Tyrosine--tRNA ligase (Orientia tsutsugamushi (strain Boryong) (Rickettsia tsutsugamushi)).